The sequence spans 225 residues: MAEGETKSPGPKKCGPYISSVTSQSVNLMIRGVVLFFIGVFLALVLNLLQIQRNVTLFPPDVIASIFSSAWWVPPCCGTASAVIGLLYPCIDRHLGEPHKFKREWSSVMRCVAVFVGINHASAKVDFDNNIQLSLTLAALSIGLWWTFDRSRSGFGLGVGIAFLATVVTQLLVYNGVYQYTSPDFLYVRSWLPCIFFAGGITMGNIGRQLAMYECKVIAEKSHQE.

Residues 1–28 (MAEGETKSPGPKKCGPYISSVTSQSVNL) lie on the Cytoplasmic side of the membrane. A helical transmembrane segment spans residues 29-51 (MIRGVVLFFIGVFLALVLNLLQI). Over 52–70 (QRNVTLFPPDVIASIFSSA) the chain is Lumenal. The helical transmembrane segment at 71–88 (WWVPPCCGTASAVIGLLY) threads the bilayer. Residues 89–103 (PCIDRHLGEPHKFKR) are Cytoplasmic-facing. A helical transmembrane segment spans residues 104-126 (EWSSVMRCVAVFVGINHASAKVD). Residues 127-129 (FDN) lie on the Lumenal side of the membrane. Residues 130-148 (NIQLSLTLAALSIGLWWTF) traverse the membrane as a helical segment. Residues 149 to 153 (DRSRS) are Cytoplasmic-facing. A Phosphoserine modification is found at serine 151. Residues 154-175 (GFGLGVGIAFLATVVTQLLVYN) form a helical membrane-spanning segment. At 176 to 189 (GVYQYTSPDFLYVR) the chain is on the lumenal side. Residues 190 to 207 (SWLPCIFFAGGITMGNIG) traverse the membrane as a helical segment. The Cytoplasmic portion of the chain corresponds to 208–225 (RQLAMYECKVIAEKSHQE). The residue at position 215 (cysteine 215) is a Cysteine sulfenic acid (-SOH); alternate. Cysteine 215 participates in a covalent cross-link: Glycyl cysteine thioester (Cys-Gly) (interchain with G-Cter in ubiquitin); alternate. The KxHxx signature appears at 219 to 225 (AEKSHQE).

Belongs to the INSIG family. Interacts with SCAP; interaction is direct and only takes place in the presence of sterols; it prevents interaction between SCAP and the coat protein complex II (COPII). Associates with the SCAP-SREBP complex (composed of SCAP and SREBF1/SREBP1 or SREBF2/SREBP2); association is mediated via its interaction with SCAP and only takes place in the presence of sterols. Interacts with RNF139. Interacts with RNF145. Post-translationally, phosphorylation at Ser-151 by PCK1 reduces binding to oxysterol, disrupting the interaction between INSIG2 and SCAP, thereby promoting nuclear translocation of SREBP proteins (SREBF1/SREBP1 or SREBF2/SREBP2) and subsequent transcription of downstream lipogenesis-related genes. In terms of processing, polyubiquitinated by AMFR/gp78 at Cys-215 in some tissues such as adipose tissues, undifferentiated myoblasts and liver, leading to its degradation. In differentiated myotubes, Cys-215 oxidation prevents ubiquitination at the same site, resulting in protein stabilization. Oxidized at Cys-215 in differentiated myotubes, preventing ubiquitination at the same site, and resulting in protein stabilization.

Its subcellular location is the endoplasmic reticulum membrane. Its function is as follows. Oxysterol-binding protein that mediates feedback control of cholesterol synthesis by controlling both endoplasmic reticulum to Golgi transport of SCAP and degradation of HMGCR. Acts as a negative regulator of cholesterol biosynthesis by mediating the retention of the SCAP-SREBP complex in the endoplasmic reticulum, thereby blocking the processing of sterol regulatory element-binding proteins (SREBPs) SREBF1/SREBP1 and SREBF2/SREBP2. Binds oxysterol, including 22-hydroxycholesterol, 24-hydroxycholesterol, 25-hydroxycholesterol and 27-hydroxycholesterol, regulating interaction with SCAP and retention of the SCAP-SREBP complex in the endoplasmic reticulum. In presence of oxysterol, interacts with SCAP, retaining the SCAP-SREBP complex in the endoplasmic reticulum, thereby preventing SCAP from escorting SREBF1/SREBP1 and SREBF2/SREBP2 to the Golgi. Sterol deprivation or phosphorylation by PCK1 reduce oxysterol-binding, disrupting the interaction between INSIG2 and SCAP, thereby promoting Golgi transport of the SCAP-SREBP complex, followed by processing and nuclear translocation of SREBF1/SREBP1 and SREBF2/SREBP2. Also regulates cholesterol synthesis by regulating degradation of HMGCR: initiates the sterol-mediated ubiquitin-mediated endoplasmic reticulum-associated degradation (ERAD) of HMGCR via recruitment of the reductase to the ubiquitin ligase RNF139. In Pongo abelii (Sumatran orangutan), this protein is Insulin-induced gene 2 protein.